Consider the following 387-residue polypeptide: Oleoyl-12-hydroxylase FAH12 (387 aa).

The disordered stretch occupies residues 1–34 (MGGGGRMSTVITSNNSEKKGGSSHLKRAPHTKPP). The next 2 helical transmembrane spans lie at 61 to 81 (AYDVCLSFLFYSIATNFFPYI) and 88 to 108 (VAWLVYWLFQGCILTGLWVIG). The short motif at 109–113 (HECGH) is the Histidine box-1 element. The chain crosses the membrane as a helical span at residues 121 to 141 (LADDIVGLIVHSALLVPYFSW). The Histidine box-2 signature appears at 145–149 (HRRHH). The next 3 helical transmembrane spans lie at 183–203 (VLTLAATLLLGWPLYLAFNVS), 229–249 (IYIADLGIFATTFVLYQATMA), and 253–273 (AWVMRIYGVPLLIVNCFLVMI). Positions 319–323 (HVAHH) match the Histidine box-3 motif.

Belongs to the fatty acid desaturase type 1 family. As to expression, expressed in seeds. Barely detected in leaves.

It is found in the microsome membrane. It carries out the reaction a 1-acyl-2-(9Z)-octadecenoyl-sn-glycero-3-phosphocholine + 2 Fe(II)-[cytochrome b5] + O2 + 2 H(+) = a 1-acyl-2-[(R)-12-hydroxyoleoyl]-sn-glycero-3-phosphocholine + 2 Fe(III)-[cytochrome b5] + H2O. The protein operates within lipid metabolism; monounsaturated fatty acid biosynthesis. Its activity is regulated as follows. Inhibited by oleoyloxyethyl phosphocholine. Oleoyl-12-hydroxylase involved in the biosynthesis of ricinoleate (12-hydroxy-cis-9-octadecenoate), the major fatty acid constituent of the oil seeds from castor bean plants. Catalyzes the hydroxylation at the 12-position of 1-acyl-2-oleoyl-sn-glycero-3-phosphocholine (2-oleoyl-PC), which seems to be the actual physiological subtrate. It uses cytochrome b5 as an electron donor. May also be involved in the production of lesquerolic acid (14-hydroxyeicos-cis-ll-enoic acid) in vitro. The chain is Oleoyl-12-hydroxylase FAH12 from Ricinus communis (Castor bean).